Reading from the N-terminus, the 250-residue chain is 3-deoxy-manno-octulosonate cytidylyltransferase (250 aa).

The protein belongs to the KdsB family.

It localises to the cytoplasm. The enzyme catalyses 3-deoxy-alpha-D-manno-oct-2-ulosonate + CTP = CMP-3-deoxy-beta-D-manno-octulosonate + diphosphate. The protein operates within nucleotide-sugar biosynthesis; CMP-3-deoxy-D-manno-octulosonate biosynthesis; CMP-3-deoxy-D-manno-octulosonate from 3-deoxy-D-manno-octulosonate and CTP: step 1/1. It participates in bacterial outer membrane biogenesis; lipopolysaccharide biosynthesis. Its function is as follows. Activates KDO (a required 8-carbon sugar) for incorporation into bacterial lipopolysaccharide in Gram-negative bacteria. The sequence is that of 3-deoxy-manno-octulosonate cytidylyltransferase from Francisella philomiragia subsp. philomiragia (strain ATCC 25017 / CCUG 19701 / FSC 153 / O#319-036).